We begin with the raw amino-acid sequence, 684 residues long: Kelch repeat and BTB domain-containing protein 7 (684 aa).

The disordered stretch occupies residues 1 to 27 (MQSREDVPRSRRLASPRGGRRPKRISK). Over residues 10-26 (SRRLASPRGGRRPKRIS) the composition is skewed to basic residues. Residue Ser29 is modified to Phosphoserine. The BTB domain occupies 63 to 138 (CDVTIEVVTP…CYTGRVSLSE (76 aa)). Kelch repeat units follow at residues 386–435 (AVCV…YLNG), 436–484 (YIYI…VVQN), 486–523 (LYAV…VFND), 524–564 (EIYC…IVNH), and 567–616 (KLLL…CLCA). The disordered stretch occupies residues 630–666 (ITEEDDARSESSTEWDLDGFSELDSESGSSSSFSDDE). Positions 631–654 (TEEDDARSESSTEWDLDGFSELDS) are enriched in acidic residues. The ATG8 interaction motif (AIM) signature appears at 668-671 (WVQV).

Core component of a BCR3 (BTB-CUL3-RBX1) E3 ubiquitin ligase complex, also named Cul3-RING ubiquitin ligase complex CUL3(KBTBD6/7), composed of CUL3, RBX1, KBTBD6 and KBTBD7. Interacts with GABARAP; the interaction is direct and is required for the ubiquitination of TIAM1. Interacts with GABARAPL1, GABARAPL2 and MAP1LC3B; the interaction is direct.

It is found in the cytoplasm. The protein resides in the nucleus. The protein operates within protein modification; protein ubiquitination. In terms of biological role, as part of the CUL3(KBTBD6/7) E3 ubiquitin ligase complex functions as a substrate adapter for the RAC1 guanine exchange factor (GEF) TIAM1, mediating its 'Lys-48' ubiquitination and proteasomal degradation. By controlling this ubiquitination, regulates RAC1 signal transduction and downstream biological processes including the organization of the cytoskeleton, cell migration and cell proliferation. Ubiquitination of TIAM1 requires the membrane-associated protein GABARAP which may restrict locally the activity of the complex. This chain is Kelch repeat and BTB domain-containing protein 7, found in Homo sapiens (Human).